The following is a 227-amino-acid chain: ATP synthase F(0) complex subunit a (227 aa).

6 consecutive transmembrane segments (helical) span residues 12-32 (PTYLGIPLIAVALTLPWILFP), 69-89 (WAVLLTSLMLFLITLNMLGLL), 98-118 (QLSLNMGLAVPLWLATVIIGM), 132-152 (EGTPVPLIPVLIIIETISLFI), 180-200 (FVLMPIMPTVAILTSIVLFLL), and 202-222 (LLEIAVAMIQAYVFVLLLSLY).

Belongs to the ATPase A chain family. Component of the ATP synthase complex composed at least of ATP5F1A/subunit alpha, ATP5F1B/subunit beta, ATP5MC1/subunit c (homooctomer), MT-ATP6/subunit a, MT-ATP8/subunit 8, ATP5ME/subunit e, ATP5MF/subunit f, ATP5MG/subunit g, ATP5MK/subunit k, ATP5MJ/subunit j, ATP5F1C/subunit gamma, ATP5F1D/subunit delta, ATP5F1E/subunit epsilon, ATP5PF/subunit F6, ATP5PB/subunit b, ATP5PD/subunit d, ATP5PO/subunit OSCP. ATP synthase complex consists of a soluble F(1) head domain (subunits alpha(3) and beta(3)) - the catalytic core - and a membrane F(0) domain - the membrane proton channel (subunits c, a, 8, e, f, g, k and j). These two domains are linked by a central stalk (subunits gamma, delta, and epsilon) rotating inside the F1 region and a stationary peripheral stalk (subunits F6, b, d, and OSCP). Interacts with DNAJC30; interaction is direct.

It is found in the mitochondrion inner membrane. It catalyses the reaction H(+)(in) = H(+)(out). Functionally, subunit a, of the mitochondrial membrane ATP synthase complex (F(1)F(0) ATP synthase or Complex V) that produces ATP from ADP in the presence of a proton gradient across the membrane which is generated by electron transport complexes of the respiratory chain. ATP synthase complex consist of a soluble F(1) head domain - the catalytic core - and a membrane F(1) domain - the membrane proton channel. These two domains are linked by a central stalk rotating inside the F(1) region and a stationary peripheral stalk. During catalysis, ATP synthesis in the catalytic domain of F(1) is coupled via a rotary mechanism of the central stalk subunits to proton translocation. With the subunit c (ATP5MC1), forms the proton-conducting channel in the F(0) domain, that contains two crucial half-channels (inlet and outlet) that facilitate proton movement from the mitochondrial intermembrane space (IMS) into the matrix. Protons are taken up via the inlet half-channel and released through the outlet half-channel, following a Grotthuss mechanism. The protein is ATP synthase F(0) complex subunit a of Salmo salar (Atlantic salmon).